The following is a 312-amino-acid chain: Homoserine O-succinyltransferase (312 aa).

The Acyl-thioester intermediate role is filled by Cys142. Lys163 and Ser192 together coordinate substrate. His235 (proton acceptor) is an active-site residue. Glu237 is a catalytic residue. Arg249 is a substrate binding site.

The protein belongs to the MetA family.

Its subcellular location is the cytoplasm. The catalysed reaction is L-homoserine + succinyl-CoA = O-succinyl-L-homoserine + CoA. Its pathway is amino-acid biosynthesis; L-methionine biosynthesis via de novo pathway; O-succinyl-L-homoserine from L-homoserine: step 1/1. Its function is as follows. Transfers a succinyl group from succinyl-CoA to L-homoserine, forming succinyl-L-homoserine. The chain is Homoserine O-succinyltransferase from Alteromonas mediterranea (strain DSM 17117 / CIP 110805 / LMG 28347 / Deep ecotype).